A 358-amino-acid chain; its full sequence is Oligopeptide transport ATP-binding protein OppD (358 aa).

An ABC transporter domain is found at 8-259; sequence LEVKDLAISF…PRHPYTWGLL (252 aa). 44–51 contributes to the ATP binding site; the sequence is GESGSGKS.

The protein belongs to the ABC transporter superfamily. The complex is composed of two ATP-binding proteins (OppD and OppF), two transmembrane proteins (OppB and OppC) and a solute-binding protein (OppA).

It is found in the cell membrane. It carries out the reaction a [peptide](out) + ATP + H2O = a [peptide](in) + ADP + phosphate + H(+). Functionally, part of the ABC transporter complex OppABCDF involved in the uptake of oligopeptides. Probably responsible for energy coupling to the transport system. Required for sporulation and genetic competence. In Bacillus subtilis (strain 168), this protein is Oligopeptide transport ATP-binding protein OppD.